The primary structure comprises 437 residues: Ribosomal protein uS12 methylthiotransferase RimO (437 aa).

The MTTase N-terminal domain occupies 9 to 124 (TKVNIVTLGC…LPAILKKFRA (116 aa)). Residues Cys-18, Cys-56, Cys-90, Cys-151, Cys-155, and Cys-158 each contribute to the [4Fe-4S] cluster site. The Radical SAM core domain occupies 137-367 (TTPSHYAYVK…MSIQEGISAE (231 aa)). The TRAM domain occupies 370–437 (EKKIGNTYKV…EFDLFGEIVK (68 aa)).

The protein belongs to the methylthiotransferase family. RimO subfamily. [4Fe-4S] cluster serves as cofactor.

The protein localises to the cytoplasm. The catalysed reaction is L-aspartate(89)-[ribosomal protein uS12]-hydrogen + (sulfur carrier)-SH + AH2 + 2 S-adenosyl-L-methionine = 3-methylsulfanyl-L-aspartate(89)-[ribosomal protein uS12]-hydrogen + (sulfur carrier)-H + 5'-deoxyadenosine + L-methionine + A + S-adenosyl-L-homocysteine + 2 H(+). In terms of biological role, catalyzes the methylthiolation of an aspartic acid residue of ribosomal protein uS12. The protein is Ribosomal protein uS12 methylthiotransferase RimO of Cytophaga hutchinsonii (strain ATCC 33406 / DSM 1761 / CIP 103989 / NBRC 15051 / NCIMB 9469 / D465).